The primary structure comprises 243 residues: Adenine phosphoribosyltransferase 1, chloroplastic (243 aa).

Residues 1-52 (MQTIIISPLVSHRLCLARAVPCNRLLNNHHRAPPSIRLSNHRSTTSLRLFSS) constitute a chloroplast transit peptide. Glutamine 2 bears the N-acetylalanine mark.

This sequence belongs to the purine/pyrimidine phosphoribosyltransferase family. As to quaternary structure, homodimer.

It localises to the plastid. Its subcellular location is the chloroplast. The protein resides in the cytoplasm. It catalyses the reaction AMP + diphosphate = 5-phospho-alpha-D-ribose 1-diphosphate + adenine. The protein operates within purine metabolism; AMP biosynthesis via salvage pathway; AMP from adenine: step 1/1. In terms of biological role, catalyzes a salvage reaction resulting in the formation of AMP, that is energically less costly than de novo synthesis. Contributes primarily to the recycling of adenine into adenylate nucleotides, but is also involved in the inactivation of cytokinins by phosphoribosylation. Catalyzes the conversion of cytokinins from free bases (active form) to the corresponding nucleotides (inactive form). This is Adenine phosphoribosyltransferase 1, chloroplastic (APT1) from Arabidopsis thaliana (Mouse-ear cress).